The chain runs to 483 residues: Isocitrate dehydrogenase [NADP] (483 aa).

Threonine 74 is a binding site for NADP(+). D-threo-isocitrate contacts are provided by serine 83, asparagine 85, arginine 89, arginine 99, and arginine 121. Aspartate 232 is a binding site for Mg(2+). Residues 264–270 (HGSAPDI) and asparagine 277 contribute to the NADP(+) site.

Belongs to the isocitrate and isopropylmalate dehydrogenases family. As to quaternary structure, homodimer. Requires Mg(2+) as cofactor. Mn(2+) is required as a cofactor.

It carries out the reaction D-threo-isocitrate + NADP(+) = 2-oxoglutarate + CO2 + NADPH. Catalyzes the oxidative decarboxylation of isocitrate to 2-oxoglutarate and carbon dioxide with the concomitant reduction of NADP(+). In Rickettsia typhi (strain ATCC VR-144 / Wilmington), this protein is Isocitrate dehydrogenase [NADP] (icd).